The following is a 109-amino-acid chain: uncharacterized protein (109 aa).

This is an uncharacterized protein from Bacillus subtilis (strain 168).